Here is a 267-residue protein sequence, read N- to C-terminus: Large ribosomal subunit protein uL4 (267 aa).

This sequence belongs to the universal ribosomal protein uL4 family. Part of the 50S ribosomal subunit.

One of the primary rRNA binding proteins, this protein initially binds near the 5'-end of the 23S rRNA. It is important during the early stages of 50S assembly. It makes multiple contacts with different domains of the 23S rRNA in the assembled 50S subunit and ribosome. In terms of biological role, forms part of the polypeptide exit tunnel. In Saccharolobus islandicus (strain M.16.27) (Sulfolobus islandicus), this protein is Large ribosomal subunit protein uL4.